A 427-amino-acid polypeptide reads, in one-letter code: Transcobalamin-2 (427 aa).

Residues 1–18 (MRHLGAFLFLLGVLGALT) form the signal peptide. 4 disulfide bridges follow: cysteine 21-cysteine 267, cysteine 83-cysteine 96, cysteine 116-cysteine 309, and cysteine 165-cysteine 205. Cob(II)alamin-binding positions include glutamine 104, 152–156 (TSYYQ), histidine 190, 190–194 (HHSVD), asparagine 242, serine 245, glutamine 291, and 395–397 (WQL).

This sequence belongs to the eukaryotic cobalamin transport proteins family. Interacts with CD320 (via LDL-receptor class A domains).

Its subcellular location is the secreted. Its function is as follows. Primary vitamin B12-binding and transport protein. Delivers cobalamin to cells. In Homo sapiens (Human), this protein is Transcobalamin-2 (TCN2).